Consider the following 213-residue polypeptide: Redox-sensing transcriptional repressor Rex (213 aa).

The segment at residues 18-57 is a DNA-binding region (H-T-H motif); that stretch reads LYYRFLKNLHASGKQRVSSAELSEAVKVDPATIRRDFSYF. Residue 92 to 97 participates in NAD(+) binding; sequence GVGNLG.

This sequence belongs to the transcriptional regulatory Rex family. Homodimer.

The protein resides in the cytoplasm. Its function is as follows. Modulates transcription in response to changes in cellular NADH/NAD(+) redox state. The protein is Redox-sensing transcriptional repressor Rex of Geobacillus kaustophilus (strain HTA426).